We begin with the raw amino-acid sequence, 67 residues long: Large ribosomal subunit protein bL35 (67 aa).

Belongs to the bacterial ribosomal protein bL35 family.

The polypeptide is Large ribosomal subunit protein bL35 (Rickettsia prowazekii (strain Madrid E)).